Here is a 219-residue protein sequence, read N- to C-terminus: Guanylate kinase (219 aa).

In terms of domain architecture, Guanylate kinase-like spans 15 to 194 (GLMFVLSSPS…AFAEVQSILK (180 aa)). 22–29 (SPSGAGKT) serves as a coordination point for ATP.

It belongs to the guanylate kinase family.

It localises to the cytoplasm. The catalysed reaction is GMP + ATP = GDP + ADP. Essential for recycling GMP and indirectly, cGMP. This chain is Guanylate kinase, found in Bradyrhizobium diazoefficiens (strain JCM 10833 / BCRC 13528 / IAM 13628 / NBRC 14792 / USDA 110).